The primary structure comprises 439 residues: Probable non-inhibitory serpin-Z9 (439 aa).

Residues 12-44 form a disordered region; that stretch reads RRPPFPAGDANHRRLSSAPAPKPEAPAEAMPPP. A compositionally biased stretch (pro residues) spans 31-44; the sequence is APKPEAPAEAMPPP. Residues 389 to 413 form an RCL region; sequence GIEETSVSMGLGKPLPAQHFKADHP.

This sequence belongs to the serpin family.

This is Probable non-inhibitory serpin-Z9 from Oryza sativa subsp. japonica (Rice).